The following is a 95-amino-acid chain: MNLKPLADRVIVKPAPAEEKTKGGLYIPDTGKEKPQYGEVVAVGEGKVADNGQLVQMQVKVGDKVLYGKYSGTEVQVEAEDYLIMRESDIFAILG.

Belongs to the GroES chaperonin family. In terms of assembly, heptamer of 7 subunits arranged in a ring. Interacts with the chaperonin GroEL.

Its subcellular location is the cytoplasm. Together with the chaperonin GroEL, plays an essential role in assisting protein folding. The GroEL-GroES system forms a nano-cage that allows encapsulation of the non-native substrate proteins and provides a physical environment optimized to promote and accelerate protein folding. GroES binds to the apical surface of the GroEL ring, thereby capping the opening of the GroEL channel. This chain is Co-chaperonin GroES, found in Chlorobaculum parvum (strain DSM 263 / NCIMB 8327) (Chlorobium vibrioforme subsp. thiosulfatophilum).